Reading from the N-terminus, the 254-residue chain is Adenosylcobinamide-GDP ribazoletransferase (254 aa).

7 helical membrane-spanning segments follow: residues 29 to 49 (LFWFPVVGLLLGSIQAALGYF), 50 to 70 (TSLLGWNELSAAFVVLGGIAL), 98 to 118 (IMKDPNVGSFGAIALSGMMLL), 121 to 141 (IAILKLVDIGAFACIAAGVLL), 170 to 190 (AGVVHIVVTSALTLLFLFPLL), 198 to 218 (LYAVVAMISAALAAALLTGLL), and 230 to 250 (VLGAGSEVTELFVWIAAALSA).

The protein belongs to the CobS family. Mg(2+) is required as a cofactor.

It localises to the cell inner membrane. The catalysed reaction is alpha-ribazole + adenosylcob(III)inamide-GDP = adenosylcob(III)alamin + GMP + H(+). It carries out the reaction alpha-ribazole 5'-phosphate + adenosylcob(III)inamide-GDP = adenosylcob(III)alamin 5'-phosphate + GMP + H(+). It functions in the pathway cofactor biosynthesis; adenosylcobalamin biosynthesis; adenosylcobalamin from cob(II)yrinate a,c-diamide: step 7/7. Functionally, joins adenosylcobinamide-GDP and alpha-ribazole to generate adenosylcobalamin (Ado-cobalamin). Also synthesizes adenosylcobalamin 5'-phosphate from adenosylcobinamide-GDP and alpha-ribazole 5'-phosphate. This chain is Adenosylcobinamide-GDP ribazoletransferase, found in Pelodictyon phaeoclathratiforme (strain DSM 5477 / BU-1).